The primary structure comprises 67 residues: Large ribosomal subunit protein bL35 (67 aa).

Belongs to the bacterial ribosomal protein bL35 family.

The polypeptide is Large ribosomal subunit protein bL35 (Synechocystis sp. (strain ATCC 27184 / PCC 6803 / Kazusa)).